Consider the following 121-residue polypeptide: Small ribosomal subunit protein uS13 (121 aa).

Positions 91–121 are disordered; that stretch reads HRRGLPTRGQNTKNNARTRKGPVKTVANKKK. Positions 106–121 are enriched in basic residues; that stretch reads ARTRKGPVKTVANKKK.

Belongs to the universal ribosomal protein uS13 family. Part of the 30S ribosomal subunit. Forms a loose heterodimer with protein S19. Forms two bridges to the 50S subunit in the 70S ribosome.

Its function is as follows. Located at the top of the head of the 30S subunit, it contacts several helices of the 16S rRNA. In the 70S ribosome it contacts the 23S rRNA (bridge B1a) and protein L5 of the 50S subunit (bridge B1b), connecting the 2 subunits; these bridges are implicated in subunit movement. Contacts the tRNAs in the A and P-sites. This chain is Small ribosomal subunit protein uS13, found in Macrococcus caseolyticus (strain JCSC5402) (Macrococcoides caseolyticum).